Consider the following 431-residue polypeptide: Enolase (431 aa).

Glutamine 168 is a (2R)-2-phosphoglycerate binding site. Glutamate 210 functions as the Proton donor in the catalytic mechanism. 3 residues coordinate Mg(2+): aspartate 247, glutamate 291, and aspartate 318. (2R)-2-phosphoglycerate is bound by residues lysine 343, arginine 372, serine 373, and lysine 394. Residue lysine 343 is the Proton acceptor of the active site.

Belongs to the enolase family. In terms of assembly, component of the RNA degradosome, a multiprotein complex involved in RNA processing and mRNA degradation. The cofactor is Mg(2+).

It is found in the cytoplasm. The protein resides in the secreted. The protein localises to the cell surface. The catalysed reaction is (2R)-2-phosphoglycerate = phosphoenolpyruvate + H2O. Its pathway is carbohydrate degradation; glycolysis; pyruvate from D-glyceraldehyde 3-phosphate: step 4/5. Catalyzes the reversible conversion of 2-phosphoglycerate (2-PG) into phosphoenolpyruvate (PEP). It is essential for the degradation of carbohydrates via glycolysis. In Acinetobacter baylyi (strain ATCC 33305 / BD413 / ADP1), this protein is Enolase.